The sequence spans 378 residues: Glutamate 5-kinase (378 aa).

ATP is bound at residue Lys-15. Residues Ser-56, Asp-143, and Asn-155 each contribute to the substrate site. 175–176 provides a ligand contact to ATP; it reads SD. In terms of domain architecture, PUA spans 281-358; the sequence is KGTLTIDAGA…PDVAVILGIS (78 aa).

The protein belongs to the glutamate 5-kinase family.

The protein localises to the cytoplasm. It carries out the reaction L-glutamate + ATP = L-glutamyl 5-phosphate + ADP. It functions in the pathway amino-acid biosynthesis; L-proline biosynthesis; L-glutamate 5-semialdehyde from L-glutamate: step 1/2. Catalyzes the transfer of a phosphate group to glutamate to form L-glutamate 5-phosphate. The protein is Glutamate 5-kinase of Bradyrhizobium sp. (strain BTAi1 / ATCC BAA-1182).